Consider the following 272-residue polypeptide: NH(3)-dependent NAD(+) synthetase (272 aa).

Glycine 43–serine 50 is a binding site for ATP. Aspartate 49 is a binding site for Mg(2+). A deamido-NAD(+)-binding site is contributed by arginine 138. An ATP-binding site is contributed by threonine 158. Position 163 (glutamate 163) interacts with Mg(2+). 2 residues coordinate deamido-NAD(+): lysine 171 and aspartate 178. ATP is bound by residues lysine 187 and threonine 209. Residue histidine 258–lysine 259 participates in deamido-NAD(+) binding.

The protein belongs to the NAD synthetase family. Homodimer.

The enzyme catalyses deamido-NAD(+) + NH4(+) + ATP = AMP + diphosphate + NAD(+) + H(+). Its pathway is cofactor biosynthesis; NAD(+) biosynthesis; NAD(+) from deamido-NAD(+) (ammonia route): step 1/1. Its function is as follows. Catalyzes the ATP-dependent amidation of deamido-NAD to form NAD. Uses ammonia as a nitrogen source. This Halalkalibacterium halodurans (strain ATCC BAA-125 / DSM 18197 / FERM 7344 / JCM 9153 / C-125) (Bacillus halodurans) protein is NH(3)-dependent NAD(+) synthetase.